Here is a 597-residue protein sequence, read N- to C-terminus: Arginine--tRNA ligase (597 aa).

A 'HIGH' region motif is present at residues 125–135 (PNTNKPLHLGH).

The protein belongs to the class-I aminoacyl-tRNA synthetase family. Monomer.

It is found in the cytoplasm. The catalysed reaction is tRNA(Arg) + L-arginine + ATP = L-arginyl-tRNA(Arg) + AMP + diphosphate. This Porphyromonas gingivalis (strain ATCC BAA-308 / W83) protein is Arginine--tRNA ligase.